Reading from the N-terminus, the 309-residue chain is RHOMBOID-like protein 5 (309 aa).

7 helical membrane-spanning segments follow: residues 27–47 (IPVP…FVTF), 113–133 (IWLH…MCIG), 140–160 (FGFM…SLVS), 170–190 (VSVG…SELI), 200–220 (CTAL…GFLP), 222–242 (VDNS…FVLL), and 274–294 (IFRF…YTKL). Ser175 (nucleophile) is an active-site residue. The active-site Charge relay system is His227.

Belongs to the peptidase S54 family.

The protein localises to the membrane. The enzyme catalyses Cleaves type-1 transmembrane domains using a catalytic dyad composed of serine and histidine that are contributed by different transmembrane domains.. Functionally, probable rhomboid-type serine protease that catalyzes intramembrane proteolysis. May function in reproductive organs maturation. The polypeptide is RHOMBOID-like protein 5 (Arabidopsis thaliana (Mouse-ear cress)).